The sequence spans 172 residues: Peroxiredoxin AHP1 (172 aa).

Positions 4 to 171 (LQPGDSFPAN…VLTVLGNQGK (168 aa)) constitute a Thioredoxin domain. A Glycyl lysine isopeptide (Lys-Gly) (interchain with G-Cter in URM1) cross-link involves residue Lys44. Cys60 acts as the Cysteine sulfenic acid (-SOH) intermediate in catalysis. A Cysteine persulfide modification is found at Cys60. Residues Lys63, Lys99, Lys141, Lys156, and Lys171 each participate in a glycyl lysine isopeptide (Lys-Gly) (interchain with G-Cter in URM1) cross-link.

It belongs to the peroxiredoxin family. Prx5 subfamily. As to quaternary structure, homodimer; disulfide-linked, upon oxidation. Conjugated to URM1, a ubiquitin-like protein, in response to oxidative stresses. The attachment of URM1 to lysine residues exclusively depends on the presence of a peroxidatic cysteine in the target protein, with low specificity for the particular residue, motif, or structural context at which urmylation can occur. The URM1-conjugation reaction is mechanistically and directly coupled to the process of cysteine persulfidation, transfering the sulfur atom of the URM1 thiocarboxyl group to redox-active cysteine residues in the target protein if it is exposed to oxidative conditions. Post-translationally, persulfidated on specific redox-active cysteine residues. Persulfidation (also called protein S-sulfhydration) may provide a molecular mechanism that enables cells to protect vulnerable cysteine residues from reactive oxygen species (ROS) under stress conditions.

The protein localises to the cytoplasm. The enzyme catalyses a hydroperoxide + [thioredoxin]-dithiol = an alcohol + [thioredoxin]-disulfide + H2O. Its function is as follows. Thiol-specific peroxidase that catalyzes the reduction of hydrogen peroxide and organic hydroperoxides to water and alcohols, respectively. Plays a role in cell protection against oxidative stress by detoxifying peroxides and as sensor of hydrogen peroxide-mediated signaling events. Preferentially eliminates organic peroxides rather than hydrogen peroxide. Relays alkyl hydroperoxides as a signal to the transcription factor CAD1/YAP2 by inducing the formation of intramolecular disulfide bonds in CAD1, which causes its nuclear accumulation and activation. Involved in cellular Mn(2+) homeostasis. This Chaetomium thermophilum (strain DSM 1495 / CBS 144.50 / IMI 039719) (Thermochaetoides thermophila) protein is Peroxiredoxin AHP1 (AHP1).